A 370-amino-acid polypeptide reads, in one-letter code: Histidinol-phosphate aminotransferase 1 (370 aa).

The residue at position 222 (K222) is an N6-(pyridoxal phosphate)lysine.

It belongs to the class-II pyridoxal-phosphate-dependent aminotransferase family. Histidinol-phosphate aminotransferase subfamily. Homodimer. It depends on pyridoxal 5'-phosphate as a cofactor.

It catalyses the reaction L-histidinol phosphate + 2-oxoglutarate = 3-(imidazol-4-yl)-2-oxopropyl phosphate + L-glutamate. It participates in amino-acid biosynthesis; L-histidine biosynthesis; L-histidine from 5-phospho-alpha-D-ribose 1-diphosphate: step 7/9. This Bacillus thuringiensis subsp. konkukian (strain 97-27) protein is Histidinol-phosphate aminotransferase 1.